Reading from the N-terminus, the 363-residue chain is Disease resistance protein RBA1 (363 aa).

The region spanning proline 12–leucine 175 is the TIR domain. NAD(+)-binding positions include arginine 21–arginine 26 and glycine 53. Glutamate 86 is an active-site residue.

In terms of assembly, homooligomer; homooligomerization is required for activity.

It is found in the cytoplasm. It localises to the nucleus. The protein resides in the nucleoplasm. It carries out the reaction NAD(+) + H2O = ADP-D-ribose + nicotinamide + H(+). The catalysed reaction is NADP(+) + H2O = ADP-D-ribose 2'-phosphate + nicotinamide + H(+). Disease resistance (R) protein that specifically recognizes the HopBA1 type III effector protein from P.syringae, and triggers cell death. Acts as a NAD(+) hydrolase (NADase): in response to pathogen-recognition, catalyzes cleavage of NAD(+) into ADP-D-ribose (ADPR) and nicotinamide; NAD(+) cleavage triggering a defense system that promotes cell death. In addition to ADPR, also generates a cyclization variant of cyclic ADPR (cADPR), termed v-cADPR, for which the cyclizing bond is unknown. Also able to hydrolyze NADP(+), but not other NAD(+)-related molecules. This Arabidopsis thaliana (Mouse-ear cress) protein is Disease resistance protein RBA1.